Consider the following 147-residue polypeptide: CYFQNCPRGXXXAMSDLELRQCLPCGPGGKGRCFGPSICCGDELGCFVGTAEALRCQEEIYLPSPCQSGQKPCGSGGRCAAAGICCNDESCVTEPECREGIGFPRRVXASDRSNATLLDGPSGALLLRLVQLAAAPEPAEPAQPGVY.

Cysteine 1 and cysteine 6 are oxidised to a cystine. Glycine 9 is modified (glycine amide). 7 disulfide bridges follow: cysteine 22-cysteine 66, cysteine 25-cysteine 39, cysteine 33-cysteine 56, cysteine 40-cysteine 46, cysteine 73-cysteine 85, cysteine 79-cysteine 97, and cysteine 86-cysteine 91. Asparagine 114 is a glycosylation site (N-linked (GlcNAc...) asparagine).

The protein belongs to the vasopressin/oxytocin family. As to quaternary structure, interacts with vasopressin receptors V1bR/AVPR1B (Ki=85 pM), V1aR/AVPR1A (Ki=0.6 nM) and V2R/AVPR2 (Ki=4.9 nM). Interacts with oxytocin receptor (OXTR) (Ki=110 nM).

The protein resides in the secreted. In terms of biological role, neurophysin 2 specifically binds vasopressin. Its function is as follows. Vasopressin has a direct antidiuretic action on the kidney, it also causes vasoconstriction of the peripheral vessels. Acts by binding to vasopressin receptors (V1bR/AVPR1B, V1aR/AVPR1A, and V2R/AVPR2). This Ovis aries (Sheep) protein is Vasopressin-neurophysin 2-copeptin (AVP).